A 119-amino-acid polypeptide reads, in one-letter code: Aspartate 1-decarboxylase (119 aa).

The active-site Schiff-base intermediate with substrate; via pyruvic acid is Ser25. Position 25 is a pyruvic acid (Ser) (Ser25). Residue Thr57 participates in substrate binding. The active-site Proton donor is the Tyr58. Substrate is bound at residue 73–75 (GAA).

This sequence belongs to the PanD family. In terms of assembly, heterooctamer of four alpha and four beta subunits. Pyruvate serves as cofactor. Post-translationally, is synthesized initially as an inactive proenzyme, which is activated by self-cleavage at a specific serine bond to produce a beta-subunit with a hydroxyl group at its C-terminus and an alpha-subunit with a pyruvoyl group at its N-terminus.

The protein localises to the cytoplasm. The enzyme catalyses L-aspartate + H(+) = beta-alanine + CO2. It functions in the pathway cofactor biosynthesis; (R)-pantothenate biosynthesis; beta-alanine from L-aspartate: step 1/1. Its function is as follows. Catalyzes the pyruvoyl-dependent decarboxylation of aspartate to produce beta-alanine. The chain is Aspartate 1-decarboxylase from Desulfotalea psychrophila (strain LSv54 / DSM 12343).